The sequence spans 530 residues: Histone-arginine methyltransferase CARMER (530 aa).

Positions alanine 141–histidine 450 constitute an SAM-dependent MTase PRMT-type domain. Residues glutamine 154, arginine 163, glycine 187, glutamate 209, glutamate 238, and threonine 266 each contribute to the S-adenosyl-L-methionine site. Position 501 is an asymmetric dimethylarginine; by autocatalysis (arginine 501).

It belongs to the class I-like SAM-binding methyltransferase superfamily. Protein arginine N-methyltransferase family. In terms of assembly, homodimer. In terms of processing, the dimethylated protein is the major form.

The protein resides in the cytoplasm. Its subcellular location is the nucleus. It catalyses the reaction L-arginyl-[protein] + 2 S-adenosyl-L-methionine = N(omega),N(omega)-dimethyl-L-arginyl-[protein] + 2 S-adenosyl-L-homocysteine + 2 H(+). Its function is as follows. Methylates (mono- and asymmetric dimethylation) the guanidino nitrogens of arginyl residues in proteins. May methylate histone H3 at 'Arg-17' and activate transcription via chromatin remodeling. This chain is Histone-arginine methyltransferase CARMER (Art4), found in Drosophila erecta (Fruit fly).